The primary structure comprises 263 residues: Endonuclease 8 (263 aa).

P2 serves as the catalytic Schiff-base intermediate with DNA. E3 acts as the Proton donor in catalysis. The active-site Proton donor; for beta-elimination activity is K53. DNA contacts are provided by Q70, R125, and N169. Residues 229 to 263 (KVFHRDGEPCERCGGIIEKTTLSSRPFYWCPGCQH) form an FPG-type zinc finger. The active-site Proton donor; for delta-elimination activity is the R253.

This sequence belongs to the FPG family. Zn(2+) serves as cofactor.

The enzyme catalyses 2'-deoxyribonucleotide-(2'-deoxyribose 5'-phosphate)-2'-deoxyribonucleotide-DNA = a 3'-end 2'-deoxyribonucleotide-(2,3-dehydro-2,3-deoxyribose 5'-phosphate)-DNA + a 5'-end 5'-phospho-2'-deoxyribonucleoside-DNA + H(+). In terms of biological role, involved in base excision repair of DNA damaged by oxidation or by mutagenic agents. Acts as a DNA glycosylase that recognizes and removes damaged bases. Has a preference for oxidized pyrimidines, such as thymine glycol, 5,6-dihydrouracil and 5,6-dihydrothymine. Has AP (apurinic/apyrimidinic) lyase activity and introduces nicks in the DNA strand. Cleaves the DNA backbone by beta-delta elimination to generate a single-strand break at the site of the removed base with both 3'- and 5'-phosphates. The polypeptide is Endonuclease 8 (Escherichia coli (strain UTI89 / UPEC)).